A 173-amino-acid chain; its full sequence is Crossover junction endodeoxyribonuclease RuvC (173 aa).

Residues D8, E67, and D139 contribute to the active site. Mg(2+) contacts are provided by D8, E67, and D139.

It belongs to the RuvC family. Homodimer which binds Holliday junction (HJ) DNA. The HJ becomes 2-fold symmetrical on binding to RuvC with unstacked arms; it has a different conformation from HJ DNA in complex with RuvA. In the full resolvosome a probable DNA-RuvA(4)-RuvB(12)-RuvC(2) complex forms which resolves the HJ. The cofactor is Mg(2+).

It is found in the cytoplasm. It catalyses the reaction Endonucleolytic cleavage at a junction such as a reciprocal single-stranded crossover between two homologous DNA duplexes (Holliday junction).. In terms of biological role, the RuvA-RuvB-RuvC complex processes Holliday junction (HJ) DNA during genetic recombination and DNA repair. Endonuclease that resolves HJ intermediates. Cleaves cruciform DNA by making single-stranded nicks across the HJ at symmetrical positions within the homologous arms, yielding a 5'-phosphate and a 3'-hydroxyl group; requires a central core of homology in the junction. The consensus cleavage sequence is 5'-(A/T)TT(C/G)-3'. Cleavage occurs on the 3'-side of the TT dinucleotide at the point of strand exchange. HJ branch migration catalyzed by RuvA-RuvB allows RuvC to scan DNA until it finds its consensus sequence, where it cleaves and resolves the cruciform DNA. The chain is Crossover junction endodeoxyribonuclease RuvC from Shewanella sp. (strain ANA-3).